The chain runs to 543 residues: Probable zinc transporter protein DDB_G0283629 (543 aa).

The segment at 1–175 (MENFKNNELE…EESKPLNQLR (175 aa)) is disordered. Residues 1-186 (MENFKNNELE…LDSKKKARYS (186 aa)) lie on the Cytoplasmic side of the membrane. Low complexity-rich tracts occupy residues 11-26 (SSPI…SINN) and 41-55 (NNNN…NSHI). Composition is skewed to basic and acidic residues over residues 56 to 66 (NNHDHKHNHEH) and 76 to 104 (HNHD…EHNV). Low complexity predominate over residues 105 to 116 (GNKNLLTNNNNQ). The span at 130–140 (EDGSSSGGGGG) shows a compositional bias: gly residues. A helical transmembrane segment spans residues 187–207 (LILALTLTTIFMVGEIVGGYF). Over 208–216 (ANSLAIMTD) the chain is Extracellular. The chain crosses the membrane as a helical span at residues 217–237 (AAHLLTDIGAMFLSLFAMWIS). Residues 238–251 (QHPPTSSMSFGFHR) lie on the Cytoplasmic side of the membrane. Residues 252–272 (AEILGALVSVLMIWALTGVLV) form a helical membrane-spanning segment. At 273 to 289 (YEAIQRILYPPDAVDGK) the chain is on the extracellular side. Residues 290-310 (IMFIIASCGLFINIIDAIILH) form a helical membrane-spanning segment. At 311–375 (WGSGGHGHSH…VRNINVHSAY (65 aa)) the chain is on the cytoplasmic side. The segment at 319 to 342 (SHGGGHGHSHGIGGGTQKKKSKKN) is disordered. Residues 376–396 (IHVLGDCFQSIGVMVASCIIW) traverse the membrane as a helical segment. The Extracellular portion of the chain corresponds to 397-402 (VHPHWK). A helical transmembrane segment spans residues 403–423 (IADPITTLIFSVIVLGTTIKL). The Cytoplasmic portion of the chain corresponds to 424–543 (LRESLGVLME…NDNLSSPPNQ (120 aa)). The segment at 516 to 543 (KCKDHSCPPPKPKKKKIKNDNLSSPPNQ) is disordered.

This sequence belongs to the cation diffusion facilitator (CDF) transporter (TC 2.A.4) family. SLC30A subfamily.

The protein localises to the membrane. Functionally, may be involved in zinc transport from the cytoplasm to either intracellular organelles or extracellular spaces. The sequence is that of Probable zinc transporter protein DDB_G0283629 from Dictyostelium discoideum (Social amoeba).